A 383-amino-acid chain; its full sequence is Dual-specificity RNA methyltransferase RlmN (383 aa).

Catalysis depends on Glu-93, which acts as the Proton acceptor. The region spanning 99 to 339 is the Radical SAM core domain; that stretch reads EETRGTLCVS…TTIRKTRGDD (241 aa). The cysteines at positions 106 and 344 are disulfide-linked. [4Fe-4S] cluster contacts are provided by Cys-113, Cys-117, and Cys-120. S-adenosyl-L-methionine is bound by residues 170-171, Ser-202, 224-226, and Asn-301; these read GE and SLH. The S-methylcysteine intermediate role is filled by Cys-344.

The protein belongs to the radical SAM superfamily. RlmN family. [4Fe-4S] cluster is required as a cofactor.

It localises to the cytoplasm. It carries out the reaction adenosine(2503) in 23S rRNA + 2 reduced [2Fe-2S]-[ferredoxin] + 2 S-adenosyl-L-methionine = 2-methyladenosine(2503) in 23S rRNA + 5'-deoxyadenosine + L-methionine + 2 oxidized [2Fe-2S]-[ferredoxin] + S-adenosyl-L-homocysteine. The enzyme catalyses adenosine(37) in tRNA + 2 reduced [2Fe-2S]-[ferredoxin] + 2 S-adenosyl-L-methionine = 2-methyladenosine(37) in tRNA + 5'-deoxyadenosine + L-methionine + 2 oxidized [2Fe-2S]-[ferredoxin] + S-adenosyl-L-homocysteine. Specifically methylates position 2 of adenine 2503 in 23S rRNA and position 2 of adenine 37 in tRNAs. m2A2503 modification seems to play a crucial role in the proofreading step occurring at the peptidyl transferase center and thus would serve to optimize ribosomal fidelity. In Ralstonia pickettii (strain 12J), this protein is Dual-specificity RNA methyltransferase RlmN.